We begin with the raw amino-acid sequence, 130 residues long: Large ribosomal subunit protein bL21 (130 aa).

The segment at 110–130 (KTAAQPAADEAVAANEVDSEA) is disordered. Residues 112-130 (AAQPAADEAVAANEVDSEA) are compositionally biased toward low complexity.

The protein belongs to the bacterial ribosomal protein bL21 family. As to quaternary structure, part of the 50S ribosomal subunit. Contacts protein L20.

This protein binds to 23S rRNA in the presence of protein L20. The protein is Large ribosomal subunit protein bL21 of Cyanothece sp. (strain PCC 7425 / ATCC 29141).